The sequence spans 369 residues: IST1-like protein (369 aa).

Positions 12–59 form a coiled coil; the sequence is KLKVQLKLAVSRIQILKNKKANIVRDEKRNVAELLRKKNEESARIRVE. Positions 224–354 are disordered; sequence QIIQQQQQPQ…SSDTGYPDYD (131 aa). 2 stretches are compositionally biased toward low complexity: residues 225 to 239 and 246 to 270; these read IIQQQQQPQMPSFPI and PTFSQIQHQQQIQQQYQQQQQSPQF. The segment covering 277–305 has biased composition (polar residues); it reads FYNNNSGNQTPQFPTISTNNSDGYSNDKF. The segment covering 306-337 has biased composition (low complexity); that stretch reads NNGNNNYNNNNNNNNNNNNNNNHNNNNNNNNN.

This sequence belongs to the IST1 family.

The chain is IST1-like protein from Dictyostelium discoideum (Social amoeba).